The following is a 360-amino-acid chain: Glutamate--cysteine ligase (360 aa).

This sequence belongs to the glutamate--cysteine ligase type 2 family. YbdK subfamily.

It carries out the reaction L-cysteine + L-glutamate + ATP = gamma-L-glutamyl-L-cysteine + ADP + phosphate + H(+). Its function is as follows. Catalyzes the synthesis of gamma-glutamylcysteine (gamma-GC), the main low-molecular-weight thiol compound instead of glutathione in halophilic archaea. This Halobacterium salinarum (strain ATCC 29341 / DSM 671 / R1) protein is Glutamate--cysteine ligase.